The following is a 368-amino-acid chain: MNERIFRENTRPVQVGNLTIGGSEELTIQSMTTTKTHDVEATVAEIHRLEEVGCQIVRVACPDERAANALSAIKKRIHIPLVADIHFDYRLALKAIDAGVDKIRINPGNIGRRDRVEKVVNAAKAKNIPIRIGVNAGSLEKKIIQKYGYPTAEGMVESALDHIKILEDLDFYDIIVSLKASDVNLAIEAYDKASRAFNYPLHLGITESGTQFAGGIKSAAGLGAILSLGIGNTLRVSLSADPVEEIKVAREVLKSFGLSSNAAMLISCPTCGRIEIDLIRIANEVENYIATIKAPIKVAVLGCAVNGPGEAREADIGIAGSNGEGLLFRHGKIIRKVPEAIMVEELKKEIDILAEEYFEKKTDLESLR.

Residues Cys268, Cys271, Cys303, and Glu310 each contribute to the [4Fe-4S] cluster site.

It belongs to the IspG family. [4Fe-4S] cluster serves as cofactor.

The catalysed reaction is (2E)-4-hydroxy-3-methylbut-2-enyl diphosphate + oxidized [flavodoxin] + H2O + 2 H(+) = 2-C-methyl-D-erythritol 2,4-cyclic diphosphate + reduced [flavodoxin]. The protein operates within isoprenoid biosynthesis; isopentenyl diphosphate biosynthesis via DXP pathway; isopentenyl diphosphate from 1-deoxy-D-xylulose 5-phosphate: step 5/6. Functionally, converts 2C-methyl-D-erythritol 2,4-cyclodiphosphate (ME-2,4cPP) into 1-hydroxy-2-methyl-2-(E)-butenyl 4-diphosphate. The chain is 4-hydroxy-3-methylbut-2-en-1-yl diphosphate synthase (flavodoxin) from Listeria monocytogenes serotype 4b (strain CLIP80459).